Here is a 205-residue protein sequence, read N- to C-terminus: Holliday junction branch migration complex subunit RuvA (205 aa).

The interval 1-64 is domain I; that stretch reads MIGRLKGILV…EDAQLLYGFI (64 aa). The segment at 65–143 is domain II; it reads HKEERSLFRL…SLMEASMGAE (79 aa). Positions 144–156 are flexible linker; that stretch reads REFVLKSNFTPAP. The segment at 157–205 is domain III; that stretch reads VAATVEEDAIAALLSLGYKPQQASKAVSSAFQEGMDPEQLIKAALKSML.

It belongs to the RuvA family. As to quaternary structure, homotetramer. Forms an RuvA(8)-RuvB(12)-Holliday junction (HJ) complex. HJ DNA is sandwiched between 2 RuvA tetramers; dsDNA enters through RuvA and exits via RuvB. An RuvB hexamer assembles on each DNA strand where it exits the tetramer. Each RuvB hexamer is contacted by two RuvA subunits (via domain III) on 2 adjacent RuvB subunits; this complex drives branch migration. In the full resolvosome a probable DNA-RuvA(4)-RuvB(12)-RuvC(2) complex forms which resolves the HJ.

It localises to the cytoplasm. Functionally, the RuvA-RuvB-RuvC complex processes Holliday junction (HJ) DNA during genetic recombination and DNA repair, while the RuvA-RuvB complex plays an important role in the rescue of blocked DNA replication forks via replication fork reversal (RFR). RuvA specifically binds to HJ cruciform DNA, conferring on it an open structure. The RuvB hexamer acts as an ATP-dependent pump, pulling dsDNA into and through the RuvAB complex. HJ branch migration allows RuvC to scan DNA until it finds its consensus sequence, where it cleaves and resolves the cruciform DNA. In Shewanella amazonensis (strain ATCC BAA-1098 / SB2B), this protein is Holliday junction branch migration complex subunit RuvA.